A 327-amino-acid chain; its full sequence is GMP reductase (327 aa).

The active-site Thioimidate intermediate is Cys175. 204 to 227 (IIADGGIRTNGDVAKSIRFGATMV) contributes to the NADP(+) binding site.

This sequence belongs to the IMPDH/GMPR family. GuaC type 2 subfamily.

It catalyses the reaction IMP + NH4(+) + NADP(+) = GMP + NADPH + 2 H(+). Its function is as follows. Catalyzes the irreversible NADPH-dependent deamination of GMP to IMP. It functions in the conversion of nucleobase, nucleoside and nucleotide derivatives of G to A nucleotides, and in maintaining the intracellular balance of A and G nucleotides. The chain is GMP reductase from Bacillus cereus (strain ZK / E33L).